The primary structure comprises 883 residues: Phosphoenolpyruvate carboxylase (883 aa).

Active-site residues include H138 and K546.

This sequence belongs to the PEPCase type 1 family. The cofactor is Mg(2+).

It carries out the reaction oxaloacetate + phosphate = phosphoenolpyruvate + hydrogencarbonate. Functionally, forms oxaloacetate, a four-carbon dicarboxylic acid source for the tricarboxylic acid cycle. This is Phosphoenolpyruvate carboxylase from Salmonella paratyphi A (strain ATCC 9150 / SARB42).